The primary structure comprises 361 residues: tRNA-specific 2-thiouridylase MnmA (361 aa).

ATP-binding positions include 11–18 and methionine 37; that span reads GMSGGVDS. The active-site Nucleophile is cysteine 106. Cysteine 106 and cysteine 202 are disulfide-bonded. Position 130 (glycine 130) interacts with ATP. The tract at residues 152-154 is interaction with tRNA; it reads KDQ. Residue cysteine 202 is the Cysteine persulfide intermediate of the active site. An interaction with tRNA region spans residues 308–309; it reads RY.

This sequence belongs to the MnmA/TRMU family.

The protein resides in the cytoplasm. It catalyses the reaction S-sulfanyl-L-cysteinyl-[protein] + uridine(34) in tRNA + AH2 + ATP = 2-thiouridine(34) in tRNA + L-cysteinyl-[protein] + A + AMP + diphosphate + H(+). Functionally, catalyzes the 2-thiolation of uridine at the wobble position (U34) of tRNA, leading to the formation of s(2)U34. This Clostridium botulinum (strain Alaska E43 / Type E3) protein is tRNA-specific 2-thiouridylase MnmA.